The sequence spans 397 residues: t-SNARE affecting a late Golgi compartment protein 2 (397 aa).

The Cytoplasmic portion of the chain corresponds to M1–K317. Residues D74–V96 are a coiled coil. Phosphoserine is present on S109. The t-SNARE coiled-coil homology domain maps to E244 to A306. Residues V318–H338 traverse the membrane as a helical; Anchor for type IV membrane protein segment. Residues G339–L397 are Vesicular-facing. The interval G341–L397 is disordered. Residues N353–D374 show a composition bias toward basic and acidic residues. Residues T386 to L397 show a composition bias toward acidic residues.

It belongs to the syntaxin family. In terms of assembly, interacts with VPS45.

Its subcellular location is the golgi apparatus. It is found in the trans-Golgi network membrane. The protein resides in the endosome membrane. Functionally, t-SNARE that functions in transport from the endosome to the late Golgi and on the endocytic pathway. In Saccharomyces cerevisiae (strain ATCC 204508 / S288c) (Baker's yeast), this protein is t-SNARE affecting a late Golgi compartment protein 2 (TLG2).